The sequence spans 757 residues: MGSSLNKPLSDRVEDINNQSSMIYDPWRHRGDVNSTYHSSSSVTHRRRNHRLSPLEKQKMKNIQSLNFSVNDNLLQREEYEKTTKGLHLKKTFGKWIICLFLGVIVGCIAYVIKMVVQLLQGLKFHYTNHYVSNGLQGEAFLTFLGINLLFVFLSCLMVIVAGPLASSSGIPEVKGILNGVKVREALGFRALLGKIVSLVLSFSSGLFVGPEGPMIHIGSAVGAAISQFKSSTMGFYPSLFLSYRNDRDKRDFISIGAATGLAAAFGAPIGGVLFSIEEVSSFWSRQLTWRTFFTCVIAAFTTNFLLQGIGSSPDMHDTGLLTFGFSRLYLFRYSELLCFCFLGLIGGLLGAFFVFLNIHLNKWRKEKLKQNPYLRLFEALFVSVVTSVVCYYASFIFDCRYQSNIVIETSVCEDQSNTEMVQFFCPDGMYSELGSLLFGNPDQALRRLYSRTNNMFTLPPLLVFTLISLFFSIWSSGLWVAGGLFVPMMMVGAGFGRLFGQTISMWFTNIDSSIYALVGSAAMMAGYCRMTVCIVVIMVELTEGTQYLVPIILAVMISKWVGDFFNESVYEHLMEQKSIPFLQSKPPHSTNNIRISDVMSKNVVVLPEVCQVRLLVNILNSNNHNAFPVINSGPYDNQRLYRGIILRDHILVLLFYRVFYRGTGEEIYLDENFDFDKFTTETSKSPPPLSEMNFDQFELDSFIDLRPYMNSSGVTIHNTFSFVEAYKLFRNMGLRHLPVIDINNEVVGMVTRNDLF.

At 1-96 the chain is on the cytoplasmic side; that stretch reads MGSSLNKPLS…LHLKKTFGKW (96 aa). 11 helical membrane passes run 97-117, 141-161, 196-216, 253-273, 292-312, 337-357, 378-398, 462-482, 484-504, 506-526, and 535-555; these read IICL…KMVV, FLTF…MVIV, IVSL…GPMI, FISI…IGGV, TFFT…GIGS, LLCF…FVFL, FEAL…SFIF, LLVF…LWVA, GLFV…GQTI, MWFT…AMMA, and IVVI…IILA. CBS domains lie at 600 to 667 and 710 to 757; these read MSKN…TGEE and MNSS…NDLF.

It belongs to the chloride channel (TC 2.A.49) family.

Its subcellular location is the membrane. In terms of biological role, voltage-gated chloride channel. Chloride channels may have several functions including the regulation of cell volume, membrane potential stabilization and signal transduction. In Dictyostelium discoideum (Social amoeba), this protein is Chloride channel protein C (clcC).